The primary structure comprises 471 residues: Cytochrome b-c1 complex subunit 1, mitochondrial (471 aa).

Belongs to the peptidase M16 family.

It localises to the mitochondrion matrix. This is Cytochrome b-c1 complex subunit 1, mitochondrial (ucr-1) from Caenorhabditis elegans.